Reading from the N-terminus, the 175-residue chain is Rubredoxin-1 (175 aa).

Rubredoxin-like domains lie at 1–53 (MARY…FVLI) and 119–170 (FLKW…YVLY). Residues cysteine 6, cysteine 9, cysteine 39, cysteine 42, cysteine 124, cysteine 127, cysteine 157, and cysteine 160 each contribute to the Fe cation site.

It belongs to the rubredoxin family. It depends on Fe(3+) as a cofactor.

It localises to the cytoplasm. It functions in the pathway hydrocarbon metabolism; alkane degradation. Functionally, involved in the hydrocarbon hydroxylating system, which transfers electrons from NADH to rubredoxin reductase and then through rubredoxin to alkane 1 monooxygenase. The protein is Rubredoxin-1 (alkG) of Pseudomonas putida (Arthrobacter siderocapsulatus).